The primary structure comprises 354 residues: Nicotinate-nucleotide--dimethylbenzimidazole phosphoribosyltransferase (354 aa).

The active-site Proton acceptor is the Glu-319.

This sequence belongs to the CobT family.

The catalysed reaction is 5,6-dimethylbenzimidazole + nicotinate beta-D-ribonucleotide = alpha-ribazole 5'-phosphate + nicotinate + H(+). It functions in the pathway nucleoside biosynthesis; alpha-ribazole biosynthesis; alpha-ribazole from 5,6-dimethylbenzimidazole: step 1/2. In terms of biological role, catalyzes the synthesis of alpha-ribazole-5'-phosphate from nicotinate mononucleotide (NAMN) and 5,6-dimethylbenzimidazole (DMB). In Pelodictyon phaeoclathratiforme (strain DSM 5477 / BU-1), this protein is Nicotinate-nucleotide--dimethylbenzimidazole phosphoribosyltransferase.